A 467-amino-acid chain; its full sequence is ATP synthase subunit beta (467 aa).

157–164 is an ATP binding site; that stretch reads GGAGVGKT.

It belongs to the ATPase alpha/beta chains family. In terms of assembly, F-type ATPases have 2 components, CF(1) - the catalytic core - and CF(0) - the membrane proton channel. CF(1) has five subunits: alpha(3), beta(3), gamma(1), delta(1), epsilon(1). CF(0) has three main subunits: a(1), b(2) and c(9-12). The alpha and beta chains form an alternating ring which encloses part of the gamma chain. CF(1) is attached to CF(0) by a central stalk formed by the gamma and epsilon chains, while a peripheral stalk is formed by the delta and b chains.

The protein resides in the cell inner membrane. The catalysed reaction is ATP + H2O + 4 H(+)(in) = ADP + phosphate + 5 H(+)(out). Functionally, produces ATP from ADP in the presence of a proton gradient across the membrane. The catalytic sites are hosted primarily by the beta subunits. This Desulfosudis oleivorans (strain DSM 6200 / JCM 39069 / Hxd3) (Desulfococcus oleovorans) protein is ATP synthase subunit beta.